Reading from the N-terminus, the 339-residue chain is Undecaprenyl-phosphate 4-deoxy-4-formamido-L-arabinose transferase (339 aa).

2 helical membrane-spanning segments follow: residues 235 to 255 and 269 to 289; these read LSLVGGGMALAGFLFALFLLV and LFVLFAVLFMFSGVQLLGMGL.

It belongs to the glycosyltransferase 2 family.

It localises to the cell inner membrane. The catalysed reaction is UDP-4-deoxy-4-formamido-beta-L-arabinose + di-trans,octa-cis-undecaprenyl phosphate = 4-deoxy-4-formamido-alpha-L-arabinopyranosyl di-trans,octa-cis-undecaprenyl phosphate + UDP. It functions in the pathway glycolipid biosynthesis; 4-amino-4-deoxy-alpha-L-arabinose undecaprenyl phosphate biosynthesis; 4-amino-4-deoxy-alpha-L-arabinose undecaprenyl phosphate from UDP-4-deoxy-4-formamido-beta-L-arabinose and undecaprenyl phosphate: step 1/2. It participates in bacterial outer membrane biogenesis; lipopolysaccharide biosynthesis. Catalyzes the transfer of 4-deoxy-4-formamido-L-arabinose from UDP to undecaprenyl phosphate. The modified arabinose is attached to lipid A and is required for resistance to polymyxin and cationic antimicrobial peptides. This chain is Undecaprenyl-phosphate 4-deoxy-4-formamido-L-arabinose transferase, found in Pseudomonas aeruginosa (strain UCBPP-PA14).